A 141-amino-acid polypeptide reads, in one-letter code: Large ribosomal subunit protein uL11 (141 aa).

Belongs to the universal ribosomal protein uL11 family. Part of the ribosomal stalk of the 50S ribosomal subunit. Interacts with L10 and the large rRNA to form the base of the stalk. L10 forms an elongated spine to which L12 dimers bind in a sequential fashion forming a multimeric L10(L12)X complex. One or more lysine residues are methylated.

Its function is as follows. Forms part of the ribosomal stalk which helps the ribosome interact with GTP-bound translation factors. This is Large ribosomal subunit protein uL11 from Clostridium tetani (strain Massachusetts / E88).